The following is a 263-amino-acid chain: Interleukin-22 receptor subunit alpha-2 (263 aa).

A signal peptide spans M1 to G21. 3 consecutive Fibronectin type-III domains span residues H26–F68, G100–D161, and P162–P263. N56 carries an N-linked (GlcNAc...) asparagine glycan. A disulfide bond links C110 and C118. N-linked (GlcNAc...) asparagine glycosylation is found at N166, N171, N192, and N209. C238 and C259 form a disulfide bridge.

The protein belongs to the type II cytokine receptor family. Expressed in placenta, spleen, breast, skin and lung. Also detected in intestinal tract, testis, brain, heart and thymus. No expression found in prostate, bladder, kidney, ovary, muscle, bone marrow, liver and uterus. Isoform 1 is expressed only in placenta. Isoform 2 is expressed in placenta and breast and at lower level in spleen, skin, thymus and stomach.

The protein resides in the secreted. Its function is as follows. Isoform 2 is a receptor for IL22. Binds to IL22, prevents interaction with the functional IL-22R complex and blocks the activity of IL22 (in vitro). May play an important role as an IL22 antagonist in the regulation of inflammatory responses. In terms of biological role, isoform 1 may play a role in establishing and maintaining successful pregnancy. In Homo sapiens (Human), this protein is Interleukin-22 receptor subunit alpha-2 (IL22RA2).